A 131-amino-acid polypeptide reads, in one-letter code: D-ribose pyranase (131 aa).

Residue H20 is the Proton donor of the active site. Residues D28, H98, and 120–122 (YAN) each bind substrate.

This sequence belongs to the RbsD / FucU family. RbsD subfamily. Homodecamer.

The protein localises to the cytoplasm. The enzyme catalyses beta-D-ribopyranose = beta-D-ribofuranose. It participates in carbohydrate metabolism; D-ribose degradation; D-ribose 5-phosphate from beta-D-ribopyranose: step 1/2. Functionally, catalyzes the interconversion of beta-pyran and beta-furan forms of D-ribose. The protein is D-ribose pyranase of Bacillus cereus (strain G9842).